Consider the following 368-residue polypeptide: tRNA-specific 2-thiouridylase MnmA (368 aa).

ATP is bound by residues 11 to 18 (GMSGGVDS) and M37. The segment at 97–99 (NPD) is interaction with target base in tRNA. Catalysis depends on C102, which acts as the Nucleophile. C102 and C199 are disulfide-bonded. G127 is an ATP binding site. Positions 149-151 (KDQ) are interaction with tRNA. The active-site Cysteine persulfide intermediate is the C199. Positions 311 to 312 (RY) are interaction with tRNA.

This sequence belongs to the MnmA/TRMU family. In terms of assembly, interacts with TusE.

The protein resides in the cytoplasm. It carries out the reaction S-sulfanyl-L-cysteinyl-[protein] + uridine(34) in tRNA + AH2 + ATP = 2-thiouridine(34) in tRNA + L-cysteinyl-[protein] + A + AMP + diphosphate + H(+). Its function is as follows. Catalyzes the 2-thiolation of uridine at the wobble position (U34) of tRNA(Lys), tRNA(Glu) and tRNA(Gln), leading to the formation of s(2)U34, the first step of tRNA-mnm(5)s(2)U34 synthesis. Sulfur is provided by IscS, via a sulfur-relay system. Binds ATP and its substrate tRNAs. This is tRNA-specific 2-thiouridylase MnmA from Salmonella paratyphi B (strain ATCC BAA-1250 / SPB7).